The following is a 459-amino-acid chain: ATP synthase subunit beta 1 (459 aa).

148–155 (GGAGVGKT) is an ATP binding site.

Belongs to the ATPase alpha/beta chains family. As to quaternary structure, F-type ATPases have 2 components, CF(1) - the catalytic core - and CF(0) - the membrane proton channel. CF(1) has five subunits: alpha(3), beta(3), gamma(1), delta(1), epsilon(1). CF(0) has three main subunits: a(1), b(2) and c(9-12). The alpha and beta chains form an alternating ring which encloses part of the gamma chain. CF(1) is attached to CF(0) by a central stalk formed by the gamma and epsilon chains, while a peripheral stalk is formed by the delta and b chains.

It is found in the cell inner membrane. The enzyme catalyses ATP + H2O + 4 H(+)(in) = ADP + phosphate + 5 H(+)(out). Its function is as follows. Produces ATP from ADP in the presence of a proton gradient across the membrane. The catalytic sites are hosted primarily by the beta subunits. The protein is ATP synthase subunit beta 1 of Nitrosospira multiformis (strain ATCC 25196 / NCIMB 11849 / C 71).